We begin with the raw amino-acid sequence, 179 residues long: MKMFESLDSSATKSGRDLWAEICSCLPSPAQEDVSDNAFSDSFMDSHPAGESHTAAADSAVQPAGKPWAPLHDSEVYLASLEKKLRRIKGLNEEVTSKDMLRTLAQAKKECWDRFLQEKLASEFFVDGLDSDERTLEHFKRWLQPDKVAISTEEVQFLIPPESQAEKPEAGDKPAAAEQ.

Residues 36 to 65 (DNAFSDSFMDSHPAGESHTAAADSAVQPAG) form a disordered region. Residues 75–98 (EVYLASLEKKLRRIKGLNEEVTSK) adopt a coiled-coil conformation. The segment at 158–179 (LIPPESQAEKPEAGDKPAAAEQ) is disordered.

Interacts with AP2S1; the interaction is direct and mediates association with adaptor protein complex 2 (AP-2).

It localises to the membrane. The protein localises to the coated pit. Its function is as follows. Regulates clathrin-mediated endocytsois of cargos such as transferrin probably through the association and modulation of adaptor protein complex 2 (AP-2). Has a role in ciliogenesis. Required for proper cephalic and left/right axis development. The chain is Coiled-coil domain-containing protein 32 (Ccdc32) from Mus musculus (Mouse).